The chain runs to 426 residues: 3-phosphoshikimate 1-carboxyvinyltransferase (426 aa).

The 3-phosphoshikimate site is built by K22, S23, and R27. K22 contacts phosphoenolpyruvate. Positions 96 and 124 each coordinate phosphoenolpyruvate. S170, S171, Q172, S198, D314, N337, and K341 together coordinate 3-phosphoshikimate. Position 172 (Q172) interacts with phosphoenolpyruvate. Catalysis depends on D314, which acts as the Proton acceptor. The phosphoenolpyruvate site is built by R345, R387, and K412.

This sequence belongs to the EPSP synthase family. Monomer.

The protein resides in the cytoplasm. It catalyses the reaction 3-phosphoshikimate + phosphoenolpyruvate = 5-O-(1-carboxyvinyl)-3-phosphoshikimate + phosphate. It functions in the pathway metabolic intermediate biosynthesis; chorismate biosynthesis; chorismate from D-erythrose 4-phosphate and phosphoenolpyruvate: step 6/7. In terms of biological role, catalyzes the transfer of the enolpyruvyl moiety of phosphoenolpyruvate (PEP) to the 5-hydroxyl of shikimate-3-phosphate (S3P) to produce enolpyruvyl shikimate-3-phosphate and inorganic phosphate. This chain is 3-phosphoshikimate 1-carboxyvinyltransferase, found in Shewanella sp. (strain MR-7).